A 704-amino-acid polypeptide reads, in one-letter code: Elongation factor G (704 aa).

The 283-residue stretch at 8-290 folds into the tr-type G domain; the sequence is ARYRNIGISA…AVIDYLPSPV (283 aa). Residues 17 to 24, 88 to 92, and 142 to 145 contribute to the GTP site; these read AHIDAGKT, DTPGH, and NKMD. N6-acetyllysine is present on residues Lys-504 and Lys-643.

This sequence belongs to the TRAFAC class translation factor GTPase superfamily. Classic translation factor GTPase family. EF-G/EF-2 subfamily.

Its subcellular location is the cytoplasm. Its function is as follows. Catalyzes the GTP-dependent ribosomal translocation step during translation elongation. During this step, the ribosome changes from the pre-translocational (PRE) to the post-translocational (POST) state as the newly formed A-site-bound peptidyl-tRNA and P-site-bound deacylated tRNA move to the P and E sites, respectively. Catalyzes the coordinated movement of the two tRNA molecules, the mRNA and conformational changes in the ribosome. The polypeptide is Elongation factor G (Shigella sonnei (strain Ss046)).